The chain runs to 356 residues: Isocitrate dehydrogenase [NAD] subunit 1, mitochondrial (356 aa).

Residues arginine 106, arginine 137, and aspartate 224 each coordinate substrate. Position 224 (aspartate 224) interacts with Mg(2+).

This sequence belongs to the isocitrate and isopropylmalate dehydrogenases family. In terms of assembly, octamer of two non-identical subunits IDH1 and IDH2. It depends on Mg(2+) as a cofactor. Mn(2+) is required as a cofactor.

It localises to the mitochondrion. The catalysed reaction is D-threo-isocitrate + NAD(+) = 2-oxoglutarate + CO2 + NADH. In terms of biological role, performs an essential role in the oxidative function of the citric acid cycle. Also binds RNA; specifically to the 5'-untranslated leaders of mitochondrial mRNAs. The protein is Isocitrate dehydrogenase [NAD] subunit 1, mitochondrial (idh1) of Schizosaccharomyces pombe (strain 972 / ATCC 24843) (Fission yeast).